Reading from the N-terminus, the 179-residue chain is MAKLHDKYQETVVAELTKKFGYTSVMQVPRIEKITLNMGVGEAVADKKVMEHAVRDMTAIAGQKPVVTVARKSVAGFKIREGYPIGCKVTLRGERMWEFLERLVDIAIPRIRDFRGLSAKAFDGRGNYAMGVREQIIFPEIDYDKIDKIRGMDIVITTSANSDEEGRALLDAFNFPFKK.

Belongs to the universal ribosomal protein uL5 family. As to quaternary structure, part of the 50S ribosomal subunit; part of the 5S rRNA/L5/L18/L25 subcomplex. Contacts the 5S rRNA and the P site tRNA. Forms a bridge to the 30S subunit in the 70S ribosome.

This is one of the proteins that bind and probably mediate the attachment of the 5S RNA into the large ribosomal subunit, where it forms part of the central protuberance. In the 70S ribosome it contacts protein S13 of the 30S subunit (bridge B1b), connecting the 2 subunits; this bridge is implicated in subunit movement. Contacts the P site tRNA; the 5S rRNA and some of its associated proteins might help stabilize positioning of ribosome-bound tRNAs. In Shewanella sp. (strain ANA-3), this protein is Large ribosomal subunit protein uL5.